A 247-amino-acid chain; its full sequence is Probable transcriptional regulatory protein plu2109 (247 aa).

It belongs to the TACO1 family.

Its subcellular location is the cytoplasm. This chain is Probable transcriptional regulatory protein plu2109, found in Photorhabdus laumondii subsp. laumondii (strain DSM 15139 / CIP 105565 / TT01) (Photorhabdus luminescens subsp. laumondii).